The chain runs to 434 residues: MTIPYLADLKDQTECKTCPKILTRCKGSLYKVILHEFLMTAGAYFGVFLVFRFAINETQREYAAEVFKKLKEQQNVCIPMQMMLAFFIATVADQWEKIFENVGYIENAALAVATFLPDGKEKRDNNGNVILAKVDNSNVRRNIIRYLVLSQILGIRDVSELVKKRFANYDMIKATGVLQDHEEPLLKKVPCKTYAESFVPITWIMSILQKFASKNEENLYYDTVYLEITDFYKKIIKLTRYDLIPIPLAYPQAVFLAVRIYFFFCLFTRQHLDLEENWALSHWGFPLLTTLQFIFLVGCMKVAEILLNPMGQDDENFECNYVMDKNLFVGLTIVSSEHTECPELEEVIGDDYVPWYPDDCKSKEEKNQEELKKYLESVDFQAVTSSDQGENDEVSTMMKVEQNSLLVCGREKFYEGGGFRNSDVYPKQRANYPH.

4 consecutive transmembrane segments (helical) span residues 31–51, 76–96, 244–264, and 278–298; these read KVIL…FLVF, VCIP…DQWE, IPIP…YFFF, and WALS…FLVG.

The protein belongs to the anion channel-forming bestrophin (TC 1.A.46) family. Calcium-sensitive chloride channel subfamily. As to quaternary structure, forms oligomers.

It localises to the cell membrane. Its function is as follows. Forms chloride channels. The polypeptide is Bestrophin homolog 12 (best-12) (Caenorhabditis elegans).